The primary structure comprises 139 residues: Protein shisa-5 (139 aa).

The chain crosses the membrane as a helical span at residues 3-23 (FGTLVAIGVIVFAVVVITIIL).

It belongs to the shisa family.

Its subcellular location is the endoplasmic reticulum membrane. It is found in the nucleus membrane. Its function is as follows. Can induce apoptosis in a caspase-dependent manner and plays a role in p53/TP53-dependent apoptosis. The polypeptide is Protein shisa-5 (Shisa5) (Gallus gallus (Chicken)).